Consider the following 319-residue polypeptide: Ankyrin repeat domain-containing protein 1 (319 aa).

A coiled-coil region spans residues 61 to 89 (KSEKQREAELKKKKLEQRSKLENLEDLEI). ANK repeat units follow at residues 152 to 181 (YKRTALHRACLEGHLAIVEKLMEAGAQIEF), 185 to 214 (LESTAIHWASRGGNLDVLKLLLNKGAKISA), 218 to 247 (LLSTALHVAVRTGHYECAEHLIACEADLNA), 251 to 280 (EGDTPLHDAVRLNRYKMIRLLIMYGADLNI), and 284 to 315 (AGKTPMDLVLHWQNGTKAIFDSLRENSYKTSR).

Interacts with YBX1. Interacts with TTN/titin. Mainly expressed in activated vascular endothelial cells. To a lower extent, also expressed in hepatoma cells.

It localises to the nucleus. May play an important role in endothelial cell activation. May act as a nuclear transcription factor that negatively regulates the expression of cardiac genes. Induction seems to be correlated with apoptotic cell death in hepatoma cells. The sequence is that of Ankyrin repeat domain-containing protein 1 (ANKRD1) from Homo sapiens (Human).